Reading from the N-terminus, the 538-residue chain is Coiled-coil domain-containing protein 8 (538 aa).

The segment at 58–128 (IMEKSTPHPP…QGPRRGKKVR (71 aa)) is disordered. Residues 119–128 (QGPRRGKKVR) are compositionally biased toward basic residues. Ser142, Ser146, and Ser261 each carry phosphoserine. The segment at 213-473 (WAPRAGPGVG…GTAPGARARK (261 aa)) is disordered. The span at 301–313 (DSQREEAIADQRE) shows a compositional bias: basic and acidic residues. Residues 321 to 332 (AGAPADQGAEAA) show a composition bias toward low complexity. Positions 349-366 (AEEGAEAADNQREEAADN) form a coiled coil. Composition is skewed to basic and acidic residues over residues 357 to 373 (DNQR…EAPA), 381 to 392 (DNHREEAADNQR), and 405 to 419 (DNQR…RERA). Composition is skewed to low complexity over residues 428–438 (QRAQARAGQRA) and 458–469 (AAQGTTGTAPGA). The PxLPxI/L motif; mediates interaction with ANKRA2 motif lies at 500–506 (PRLPTLP). Residues 514–535 (EARNLRVLRAEARAEAEQGEQE) are a coiled coil.

As to quaternary structure, component of the 3M complex, composed of core components CUL7, CCDC8 and OBSL1. Interacts (via PxLPxI/L motif) with ANKRA2 (via ankyrin repeats); may link the 3M complex to histone deacetylases including HDAC4 and HDAC5. Widely expressed with low levels in spleen, skeletal muscle, small intestine, kidney and liver.

Its subcellular location is the cytoplasm. It localises to the cytoskeleton. The protein localises to the microtubule organizing center. The protein resides in the centrosome. Functionally, core component of the 3M complex, a complex required to regulate microtubule dynamics and genome integrity. It is unclear how the 3M complex regulates microtubules, it could act by controlling the level of a microtubule stabilizer. Required for localization of CUL7 to the centrosome. The protein is Coiled-coil domain-containing protein 8 (CCDC8) of Homo sapiens (Human).